Consider the following 296-residue polypeptide: 3-methyl-2-oxobutanoate hydroxymethyltransferase (296 aa).

Low complexity predominate over residues 1 to 14; the sequence is MTAPTPTPANAATP. Residues 1-29 are disordered; sequence MTAPTPTPANAATPYGTLPPASPLPQRRP. Positions 71 and 114 each coordinate Mg(2+). 3-methyl-2-oxobutanoate contacts are provided by residues 71–72, D114, and K143; that span reads DS. E145 provides a ligand contact to Mg(2+). Catalysis depends on E212, which acts as the Proton acceptor.

It belongs to the PanB family. Homodecamer; pentamer of dimers. The cofactor is Mg(2+).

It is found in the cytoplasm. The catalysed reaction is 3-methyl-2-oxobutanoate + (6R)-5,10-methylene-5,6,7,8-tetrahydrofolate + H2O = 2-dehydropantoate + (6S)-5,6,7,8-tetrahydrofolate. Its pathway is cofactor biosynthesis; (R)-pantothenate biosynthesis; (R)-pantoate from 3-methyl-2-oxobutanoate: step 1/2. Its function is as follows. Catalyzes the reversible reaction in which hydroxymethyl group from 5,10-methylenetetrahydrofolate is transferred onto alpha-ketoisovalerate to form ketopantoate. This Paracidovorax citrulli (strain AAC00-1) (Acidovorax citrulli) protein is 3-methyl-2-oxobutanoate hydroxymethyltransferase.